Consider the following 236-residue polypeptide: uncharacterized protein (236 aa).

This sequence belongs to the HyuE racemase family.

It is found in the cytoplasm. This is an uncharacterized protein from Schizosaccharomyces pombe (strain 972 / ATCC 24843) (Fission yeast).